Consider the following 491-residue polypeptide: Meiosis-specific nuclear structural protein 1 (491 aa).

Residues 1 to 314 (MATKKRALSF…QLEETLRQRD (314 aa)) form an interaction with BBOF1 region. Coiled coils occupy residues 29–253 (QVMN…RAQD) and 287–410 (RVHE…AVEK). Phosphotyrosine is present on Tyr-188.

This sequence belongs to the MNS1 family. In terms of assembly, able to form oligomers. Microtubule inner protein component of sperm flagellar doublet microtubules. Interacts with ODAD1. Interacts with BBOF1. High expression in testis. Expressed in pachytene spermatocytes and post-meiotic spermatids.

Its subcellular location is the nucleus. It is found in the cytoplasm. The protein localises to the cytoskeleton. It localises to the flagellum axoneme. The protein resides in the cilium axoneme. In terms of biological role, microtubule inner protein (MIP) part of the dynein-decorated doublet microtubules (DMTs) in cilia axoneme, which is required for motile cilia beating. May play a role in the control of meiotic division and germ cell differentiation through regulation of pairing and recombination during meiosis. Required for sperm flagella assembly. May play a role in the assembly and function of the outer dynein arm-docking complex (ODA-DC). ODA-DC mediates outer dynein arms (ODA) binding onto the axonemal doublet microtubules. The sequence is that of Meiosis-specific nuclear structural protein 1 (Mns1) from Mus musculus (Mouse).